Consider the following 234-residue polypeptide: Protein SSP120 (234 aa).

A signal peptide spans 1-22; it reads MRFLRGFVFSLAFTLYKVTATA. EF-hand domains follow at residues 52–87 and 108–143; these read LKDY…NREE and MAKR…GNKF. Residue threonine 212 is modified to Phosphothreonine.

The protein is Protein SSP120 (SSP120) of Saccharomyces cerevisiae (strain ATCC 204508 / S288c) (Baker's yeast).